Consider the following 514-residue polypeptide: 2,3-bisphosphoglycerate-independent phosphoglycerate mutase (514 aa).

Mn(2+) contacts are provided by aspartate 14 and serine 64. The Phosphoserine intermediate role is filled by serine 64. Substrate is bound by residues histidine 125, 155–156 (RD), arginine 187, arginine 193, 263–266 (RADR), and lysine 336. Residues aspartate 403, histidine 407, aspartate 444, histidine 445, and histidine 463 each contribute to the Mn(2+) site.

This sequence belongs to the BPG-independent phosphoglycerate mutase family. Monomer. Mn(2+) serves as cofactor.

It catalyses the reaction (2R)-2-phosphoglycerate = (2R)-3-phosphoglycerate. The protein operates within carbohydrate degradation; glycolysis; pyruvate from D-glyceraldehyde 3-phosphate: step 3/5. Functionally, catalyzes the interconversion of 2-phosphoglycerate and 3-phosphoglycerate. The protein is 2,3-bisphosphoglycerate-independent phosphoglycerate mutase of Shewanella sp. (strain W3-18-1).